The sequence spans 137 residues: Small ribosomal subunit protein bS6 (137 aa).

Positions 104–137 (SLVNKANNKPEPKPTKAKKEDVAPEAKEQAQTEA) are disordered. Over residues 111-137 (NKPEPKPTKAKKEDVAPEAKEQAQTEA) the composition is skewed to basic and acidic residues.

This sequence belongs to the bacterial ribosomal protein bS6 family.

In terms of biological role, binds together with bS18 to 16S ribosomal RNA. In Helicobacter hepaticus (strain ATCC 51449 / 3B1), this protein is Small ribosomal subunit protein bS6.